The following is a 254-amino-acid chain: Proline-rich protein 23A3 (254 aa).

3 disordered regions span residues 1–50, 161–196, and 212–254; these read MLRT…LEAP, ASPPDDQANGNFSSIPGVPSPLSQDQVPGPSTGAEQ, and PFPG…LVYE. A compositionally biased stretch (low complexity) spans 35–50; the sequence is EPACPEPLAQPELEAP. Residues 214–241 are compositionally biased toward pro residues; the sequence is PGSPLQPLPPSPSRNPQEQLPPCPPCSP. The segment covering 243-254 has biased composition (basic residues); it reads APRRARKRLVYE.

It belongs to the PRR23 family.

The polypeptide is Proline-rich protein 23A3 (Mus musculus (Mouse)).